The primary structure comprises 541 residues: RING finger protein 37 (541 aa).

In terms of domain architecture, U-box spans 258–338 (DVPEEFLDPI…DHFLLQHSIP (81 aa)). Arg451 carries the asymmetric dimethylarginine modification. The RING-type zinc finger occupies 483-528 (CASCKRVFSPYFKKEPVYQLPCGHLLCRPCLGEKQRSLPMTCTACQ).

In terms of assembly, interacts with UBE2L3. Interacts with VCP. In terms of tissue distribution, expressed in liver, heart, brain, kidney and testis.

The protein localises to the nucleus. It catalyses the reaction S-ubiquitinyl-[E2 ubiquitin-conjugating enzyme]-L-cysteine + [acceptor protein]-L-lysine = [E2 ubiquitin-conjugating enzyme]-L-cysteine + N(6)-ubiquitinyl-[acceptor protein]-L-lysine.. The protein operates within protein modification; protein ubiquitination. May have a ubiquitin-protein ligase activity acting as an E3 ubiquitin-protein ligase or as a ubiquitin-ubiquitin ligase promoting elongation of ubiquitin chains on substrates. The protein is RING finger protein 37 of Homo sapiens (Human).